The sequence spans 148 residues: Globin-3 (148 aa).

A Globin domain is found at 2–148 (TLTKHEQDIL…HVFPMMAAEI (147 aa)). Histidine 99 contacts heme.

The protein belongs to the globin family. In terms of assembly, monomer.

Its function is as follows. Oxygen binding protein. This Paramphistomum epiclitum protein is Globin-3.